We begin with the raw amino-acid sequence, 3814 residues long: Hybrid PKS-NRPS synthetase pyvA (3814 aa).

The 340-residue stretch at 1–340 folds into the Ketosynthase family 3 (KS3) domain; sequence MDPQQRLLLE…GSNAHVILES (340 aa). Residues C87, H222, and H261 each act as for beta-ketoacyl synthase activity in the active site. A malonyl-CoA:ACP transacylase (MAT) domain region spans residues 441–758; the sequence is VFTGQGAQWH…PYFASLSRGV (318 aa). The active-site For malonyltransferase activity is S533. The N-terminal hotdog fold stretch occupies residues 835–970; that stretch reads HPILGAKMPG…GLISISTATT (136 aa). A dehydratase (DH) domain region spans residues 835–1149; that stretch reads HPILGAKMPG…LRLTSLSNGR (315 aa). Residues 835–1151 form the PKS/mFAS DH domain; that stretch reads HPILGAKMPG…LTSLSNGRAA (317 aa). H867 functions as the Proton acceptor; for dehydratase activity in the catalytic mechanism. Residues 970–993 are disordered; that stretch reads TADGAPSRKPYRQHPQPQPGRMST. Residues 991-1151 form a C-terminal hotdog fold region; the sequence is MSTASFPAQS…LTSLSNGRAA (161 aa). The Proton donor; for dehydratase activity role is filled by D1057. The interval 1520–1836 is enoyl reductase (ER) domain; sequence GLLETLVWED…MGRHTGKVVL (317 aa). Residues 1864 to 2036 are ketoreductase (KR) domain; that stretch reads TYLLVGGLGG…PASSMNCGRI (173 aa). The Carrier 1 domain maps to 2141–2220; that stretch reads IDLSDRVALL…ALVEKAIGLF (80 aa). The residue at position 2180 (S2180) is an O-(pantetheine 4'-phosphoryl)serine. The span at 2228 to 2238 shows a compositional bias: low complexity; it reads QQQQQSVQSSS. Positions 2228–2270 are disordered; sequence QQQQQSVQSSSAPSNDDQSPTFNKNLDSQDPSTSLQIPKADCS. Residues 2239-2263 show a composition bias toward polar residues; the sequence is APSNDDQSPTFNKNLDSQDPSTSLQ. Residues 2273–2718 are condensation (C) domain 7; the sequence is LPMSTFQNRL…PEVRLAGTLE (446 aa). The interval 2738-3149 is adenylation (A) domain 8; that stretch reads PLNLPRRIVE…DGQLEFLGRI (412 aa). The interval 3257–3304 is disordered; that stretch reads SGKTDRRALGASQAPGTPPQHGAGPAAASTLDPAQAQAQDRADEEVGD. The Carrier 2 domain maps to 3304 to 3379; the sequence is DRTMATVTRV…QLVELVHSKV (76 aa). The residue at position 3339 (S3339) is an O-(pantetheine 4'-phosphoryl)serine. The interval 3428-3680 is thioesterase (TE) domain; that stretch reads MTGAESFTGI…VDLVPVNYLT (253 aa).

In the C-terminal section; belongs to the NRP synthetase family.

It functions in the pathway secondary metabolite biosynthesis. Functionally, hybrid PKS-NRPS synthetase; part of the gene cluster that mediates the biosynthesis of pyranoviolin A, a pyranonigrin analog with a C-3 methoxy group. Initially, the PKS portion of pyvA synthesizes C-10 carbon chain from 5 molecules of malonyl-CoA, which is then condensed with the thiolation (T) domain-bound glycine activated by the adenylation (A) domain. The subsequent chain release by Dieckmann condensation (DKC) could be catalyzed by the TE domain present at the C-terminus of pyvA and/or the alpha/beta hydrolase pyvD, installing the tetramic acid moiety. The FAD-dependent monooxygenase pyvC next epoxidizes one of the olefins of the polyketide part, and the epoxide ring-opening induces the dihydro-gamma-pyrone ring formation. The cytochrome P450 monooxygeanse pyvB would be responsible for the 2 consecutive reactions, in which the dihydro-gamma-pyrone is oxidized to gamma-pyrone and C-7 is hydroxylated to yield pyranonigrin F. Finally, the O-methyltransferase pyvH methylates the C-3 hydroxy group to complete the biosynthesis. This chain is Hybrid PKS-NRPS synthetase pyvA, found in Aspergillus violaceofuscus (strain CBS 115571).